The following is a 252-amino-acid chain: Ubiquinone biosynthesis protein COQ4 homolog 2, mitochondrial (252 aa).

Positions 130, 131, 134, and 146 each coordinate Zn(2+).

It belongs to the COQ4 family. In terms of assembly, component of a multi-subunit COQ enzyme complex. It depends on Zn(2+) as a cofactor.

The protein resides in the mitochondrion inner membrane. It catalyses the reaction a 4-hydroxy-3-methoxy-5-(all-trans-polyprenyl)benzoate + H(+) = a 2-methoxy-6-(all-trans-polyprenyl)phenol + CO2. Its pathway is cofactor biosynthesis; ubiquinone biosynthesis. In terms of biological role, lyase that catalyzes the C1-decarboxylation of 4-hydroxy-3-methoxy-5-(all-trans-polyprenyl)benzoic acid into 2-methoxy-6-(all-trans-polyprenyl)phenol during ubiquinone biosynthesis. This Trypanosoma cruzi (strain CL Brener) protein is Ubiquinone biosynthesis protein COQ4 homolog 2, mitochondrial.